The chain runs to 531 residues: Bifunctional protein TrpGD (531 aa).

The Glutamine amidotransferase type-1 domain maps to 3–196 (DILLLDNIDS…LAWAQQKLEP (194 aa)). Residue 57-59 (GPG) participates in L-glutamine binding. The Nucleophile; for GATase activity role is filled by cysteine 84. Residues glutamine 88 and 134 to 135 (SL) each bind L-glutamine. Active-site for GATase activity residues include histidine 170 and glutamate 172. Residues 202-531 (PILEKLYQAQ…DRVTALAARG (330 aa)) form an anthranilate phosphoribosyltransferase region.

The protein in the C-terminal section; belongs to the anthranilate phosphoribosyltransferase family. As to quaternary structure, monomer. Heterotetramer consisting of two non-identical subunits: a beta subunit (TrpG) and a large alpha subunit (TrpE).

The enzyme catalyses chorismate + L-glutamine = anthranilate + pyruvate + L-glutamate + H(+). It catalyses the reaction N-(5-phospho-beta-D-ribosyl)anthranilate + diphosphate = 5-phospho-alpha-D-ribose 1-diphosphate + anthranilate. The protein operates within amino-acid biosynthesis; L-tryptophan biosynthesis; L-tryptophan from chorismate: step 1/5. Its pathway is amino-acid biosynthesis; L-tryptophan biosynthesis; L-tryptophan from chorismate: step 2/5. Cooperatively feedback inhibited by tryptophan. In terms of biological role, part of a heterotetrameric complex that catalyzes the two-step biosynthesis of anthranilate, an intermediate in the biosynthesis of L-tryptophan. In the first step, the glutamine-binding beta subunit (TrpG) of anthranilate synthase (AS) provides the glutamine amidotransferase activity which generates ammonia as a substrate that, along with chorismate, is used in the second step, catalyzed by the large alpha subunit of AS (TrpE) to produce anthranilate. In the absence of TrpG, TrpE can synthesize anthranilate directly from chorismate and high concentrations of ammonia. In addition to synthesizing anthranilate, it also catalyzes the second step of the pathway, the transfer of the phosphoribosyl group of 5-phosphorylribose-1-pyrophosphate (PRPP) to anthranilate. This chain is Bifunctional protein TrpGD (trpGD), found in Salmonella typhimurium (strain LT2 / SGSC1412 / ATCC 700720).